The primary structure comprises 479 residues: D-alanyl-D-alanine carboxypeptidase DacB (479 aa).

The first 26 residues, Met-1–Ala-26, serve as a signal peptide directing secretion. Ser-69 serves as the catalytic Acyl-ester intermediate. Catalysis depends on Lys-72, which acts as the Proton acceptor. Ser-310 is an active-site residue. Lys-420 is a binding site for substrate.

It belongs to the peptidase S13 family.

It is found in the periplasm. The catalysed reaction is Preferential cleavage: (Ac)2-L-Lys-D-Ala-|-D-Ala. Also transpeptidation of peptidyl-alanyl moieties that are N-acyl substituents of D-alanine.. It participates in cell wall biogenesis; peptidoglycan biosynthesis. Its function is as follows. Not involved in transpeptidation but exclusively catalyzes a DD-carboxypeptidase and DD-endopeptidase reaction. In Haemophilus influenzae (strain ATCC 51907 / DSM 11121 / KW20 / Rd), this protein is D-alanyl-D-alanine carboxypeptidase DacB (dacB).